The following is a 651-amino-acid chain: Transcription factor E2-alpha (651 aa).

Disordered stretches follow at residues 32 to 107, 131 to 208, and 341 to 378; these read ANGK…SERN, LSLS…KTPS, and DHSS…ALSP. Low complexity-rich tracts occupy residues 56–73, 131–148, and 341–354; these read SSGS…FDPS, LSLS…KSSS, and DHSS…PSTP. Ser135 and Ser140 each carry phosphoserine. At Thr353 the chain carries Phosphothreonine. Phosphoserine is present on Ser357. Arg369 carries the post-translational modification Omega-N-methylarginine. A Phosphoserine modification is found at Ser377. The tract at residues 387–422 is leucine-zipper; the sequence is LSKMEDRLDEAIHVLRSHAVGTASDLHGLLPGHGAL. The interval 457–549 is disordered; that stretch reads HNHASLPSQP…KAEREKERRV (93 aa). Residues 461–479 are compositionally biased toward low complexity; sequence SLPSQPSSLPDLSQRPPDS. Lys496 participates in a covalent cross-link: Glycyl lysine isopeptide (Lys-Gly) (interchain with G-Cter in SUMO2). A Phosphoserine modification is found at Ser526. Residue Asp528 is modified to Phosphothreonine. Phosphoserine is present on Asp533. Over residues 539 to 549 the composition is skewed to basic and acidic residues; that stretch reads QKAEREKERRV. One can recognise a bHLH domain in the interval 546–599; the sequence is ERRVANNARERLRVRDINEAFKELGRMCQLHLSSEKPQTKLLILHQAVAVILSL. Residue Lys622 forms a Glycyl lysine isopeptide (Lys-Gly) (interchain with G-Cter in SUMO2) linkage.

As to quaternary structure, homodimer. Heterodimer; efficient DNA binding requires dimerization with another bHLH protein. Forms a heterodimer with TWIST1 and TWIST2. Forms a heterodimer with NEUROD1; the heterodimer is inhibited in presence of ID2, but not NR0B2, to E-box element. Forms a heterodimer with TCF15; the heterodimer binds E-box element. Forms a heterodimer with MYOG; heterodimerization enhances MYOG DNA-binding and transcriptional activities. Forms a heterodimer with ATOH8; repress transcription of TCF3 and TCF3-NEUROG3 dimer-induced transactivation of E box-dependent promoters. Component of a nuclear TAL-1 complex composed at least of CBFA2T3, LDB1, TAL1 and TCF3. Interacts with NEUROD2. Interacts with EP300. Interacts with PTF1A, TGFB1I1 and UBE2I. Interacts with BHLHA9. Interacts with ASB2; the interaction is mediated by SKP2 and targets TCF3 for Notch-induced proteasomal degradation. Interacts with transcription factor ASCL5/AmeloD. Forms a heterodimer with ATOH7; required for ATOH7 DNA-binding. In terms of assembly, interacts with RALGAPA1. Interacts with FIGLA. In terms of processing, phosphorylated following NGF stimulation. Undergoes Notch-induced ubiquitination and subsequent proteasomal degradation which is mediated by ASB1 or ASB2, the substrate-recognition components of probable ECS E3 ubiquitin-protein ligase complexes.

Its subcellular location is the nucleus. In terms of biological role, transcriptional regulator involved in the initiation of neuronal differentiation and mesenchymal to epithelial transition. Heterodimers between TCF3 and tissue-specific basic helix-loop-helix (bHLH) proteins play major roles in determining tissue-specific cell fate during embryogenesis, like muscle or early B-cell differentiation. Together with TCF15, required for the mesenchymal to epithelial transition. Dimers bind DNA on E-box motifs: 5'-CANNTG-3'. Binds to the kappa-E2 site in the kappa immunoglobulin gene enhancer. Binds to IEB1 and IEB2, which are short DNA sequences in the insulin gene transcription control region. Its function is as follows. Facilitates ATOH7 binding to DNA at the consensus sequence 5'-CAGGTG-3', and positively regulates transcriptional activity. In Mus musculus (Mouse), this protein is Transcription factor E2-alpha (Tcf3).